We begin with the raw amino-acid sequence, 311 residues long: Malate dehydrogenase (311 aa).

NAD(+) contacts are provided by residues 7 to 12 (GAGNVG) and Asp-32. Positions 82 and 88 each coordinate substrate. NAD(+)-binding positions include Asn-95 and 118–120 (VSN). Substrate is bound by residues Asn-120 and Arg-151. The active-site Proton acceptor is the His-175.

It belongs to the LDH/MDH superfamily. MDH type 3 family. Homotetramer.

The catalysed reaction is (S)-malate + NAD(+) = oxaloacetate + NADH + H(+). Its activity is regulated as follows. Strongly inhibited by iodoacetic acid and CuCl(2). Completely inhibited by N-ethylmaleimide and HgCl(2). In terms of biological role, catalyzes the reversible oxidation of malate to oxaloacetate. Can use both NAD and NADP for malate oxidation, but NADPH cannot be used for oxaloacetate reduction. The chain is Malate dehydrogenase from Flavobacterium frigidimaris.